Reading from the N-terminus, the 41-residue chain is Large ribosomal subunit protein bL36 (41 aa).

Residues 1–21 form a disordered region; it reads MKIRNSLKSLRGRHRDNQLVR.

Belongs to the bacterial ribosomal protein bL36 family.

In Methylobacterium sp. (strain 4-46), this protein is Large ribosomal subunit protein bL36.